Consider the following 198-residue polypeptide: Inosine triphosphate pyrophosphatase (198 aa).

Ala2 carries the post-translational modification N-acetylalanine. 14–19 provides a ligand contact to ITP; sequence TGNAKK. Glu44 is a binding site for Mg(2+). ITP-binding positions include Lys56, 72–73, and Lys89; that span reads DT. Ser146 bears the Phosphoserine mark. Residues 149-152, Lys172, and 177-178 each bind ITP; these read FGWD and HR.

The protein belongs to the HAM1 NTPase family. As to quaternary structure, homodimer. Mg(2+) serves as cofactor. It depends on Mn(2+) as a cofactor.

The protein resides in the cytoplasm. It carries out the reaction ITP + H2O = IMP + diphosphate + H(+). The catalysed reaction is dITP + H2O = dIMP + diphosphate + H(+). The enzyme catalyses XTP + H2O = XMP + diphosphate + H(+). It catalyses the reaction N(6)-hydroxy-dATP + H2O = N(6)-hydroxy-dAMP + diphosphate + H(+). Its function is as follows. Pyrophosphatase that hydrolyzes the non-canonical purine nucleotides inosine triphosphate (ITP), deoxyinosine triphosphate (dITP) as well as 2'-deoxy-N-6-hydroxylaminopurine triphosphate (dHAPTP) and xanthosine 5'-triphosphate (XTP) to their respective monophosphate derivatives. The enzyme does not distinguish between the deoxy- and ribose forms. Probably excludes non-canonical purines from RNA and DNA precursor pools, thus preventing their incorporation into RNA and DNA and avoiding chromosomal lesions. In Mus musculus (Mouse), this protein is Inosine triphosphate pyrophosphatase (Itpa).